A 129-amino-acid chain; its full sequence is Protein RfbJ (129 aa).

This sequence belongs to the glycosyltransferase 2 family.

It functions in the pathway bacterial outer membrane biogenesis; lipopolysaccharide biosynthesis. The chain is Protein RfbJ (rfbJ) from Shigella flexneri.